A 59-amino-acid polypeptide reads, in one-letter code: Potassium channel toxin alpha-KTx 1.1 (59 aa).

The signal sequence occupies residues 1-22; sequence MKILSVLLLALIICSIVGWSEA. Pyrrolidone carboxylic acid is present on Gln23. Disulfide bonds link Cys29-Cys50, Cys35-Cys55, and Cys39-Cys57. The tract at residues 48–55 is interaction with Ca(2+)-activated K(+) channels; it reads GKCMNKKC.

This sequence belongs to the short scorpion toxin superfamily. Potassium channel inhibitor family. Alpha-KTx 01 subfamily. In terms of tissue distribution, expressed by the venom gland.

Its subcellular location is the secreted. Functionally, this toxin inhibits numerous potassium channels: shaker (Ki=227 nM), Kv1.2/KCNA2 (nanomolar range), Kv1.3/KCNA3 (nanomolar range), Kv1.5/KCNA5 (Kd&gt;100 nM), Kv1.6/KCNA6 (Ki=22 nM), KCa1.1/KCNMA1 (IC(50)=5.9 nM). It blocks channel activity by a simple bimolecular inhibition process. It also shows a weak interaction with nicotinic acetylcholine receptors (nAChR), suggesting it may weakly inhibit it. It also exhibits pH-specific antimicrobial activities against bacteria (B.subtilis, E.coli and S.aureus) and the fungus C.albicans. This Leiurus hebraeus (Hebrew deathstalker scorpion) protein is Potassium channel toxin alpha-KTx 1.1.